We begin with the raw amino-acid sequence, 174 residues long: MIDADGYRPNVGMIICNEQNQVLWAKRRGENAWQFPQGGIDYAETPEQAMFRELEEEVGTAKVCIIGRTRGWLRYEVPCARHRVSRRRYRGQKQIWFLLRFEGEEAEINLRTRQPEFEDWRWVDYWMPVNEIISFKRRVYWQALQELAPLINMNPPPMTDPCRSENRHPVVGNR.

One can recognise a Nudix hydrolase domain in the interval 6–145; the sequence is GYRPNVGMII…KRRVYWQALQ (140 aa). The Nudix box motif lies at 38–59; it reads GGIDYAETPEQAMFRELEEEVG.

Belongs to the Nudix hydrolase family. RppH subfamily. A divalent metal cation is required as a cofactor.

Accelerates the degradation of transcripts by removing pyrophosphate from the 5'-end of triphosphorylated RNA, leading to a more labile monophosphorylated state that can stimulate subsequent ribonuclease cleavage. This is RNA pyrophosphohydrolase from Acidithiobacillus ferrooxidans (strain ATCC 53993 / BNL-5-31) (Leptospirillum ferrooxidans (ATCC 53993)).